A 318-amino-acid chain; its full sequence is Probable arabinan endo-1,5-alpha-L-arabinosidase C (318 aa).

Residues 1-28 (MLSFVLLLCVALVNAYSDPGACSGTCWA) form the signal peptide. Asp30 (proton acceptor) is an active-site residue. 3 N-linked (GlcNAc...) asparagine glycosylation sites follow: Asn72, Asn80, and Asn188. Catalysis depends on Glu196, which acts as the Proton donor. N-linked (GlcNAc...) asparagine glycosylation is present at Asn277.

The protein belongs to the glycosyl hydrolase 43 family.

Its subcellular location is the secreted. It carries out the reaction Endohydrolysis of (1-&gt;5)-alpha-arabinofuranosidic linkages in (1-&gt;5)-arabinans.. It participates in glycan metabolism; L-arabinan degradation. Its function is as follows. Endo-1,5-alpha-L-arabinanase involved in degradation of pectin. Its preferred substrate is linear 1,5-alpha-L-arabinan. The polypeptide is Probable arabinan endo-1,5-alpha-L-arabinosidase C (abnC) (Aspergillus niger (strain ATCC MYA-4892 / CBS 513.88 / FGSC A1513)).